Reading from the N-terminus, the 397-residue chain is 1-deoxy-D-xylulose 5-phosphate reductoisomerase (397 aa).

The NADPH site is built by T12, G13, S14, I15, G38, K39, N40, and N126. Residue K127 participates in 1-deoxy-D-xylulose 5-phosphate binding. E128 contacts NADPH. Mn(2+) is bound at residue D152. Residues S153, E154, S188, and H211 each contribute to the 1-deoxy-D-xylulose 5-phosphate site. E154 provides a ligand contact to Mn(2+). Residue G217 coordinates NADPH. 1-deoxy-D-xylulose 5-phosphate-binding residues include S224, N229, K230, and E233. Residue E233 participates in Mn(2+) binding.

It belongs to the DXR family. Mg(2+) serves as cofactor. It depends on Mn(2+) as a cofactor.

The enzyme catalyses 2-C-methyl-D-erythritol 4-phosphate + NADP(+) = 1-deoxy-D-xylulose 5-phosphate + NADPH + H(+). Its pathway is isoprenoid biosynthesis; isopentenyl diphosphate biosynthesis via DXP pathway; isopentenyl diphosphate from 1-deoxy-D-xylulose 5-phosphate: step 1/6. In terms of biological role, catalyzes the NADPH-dependent rearrangement and reduction of 1-deoxy-D-xylulose-5-phosphate (DXP) to 2-C-methyl-D-erythritol 4-phosphate (MEP). This Haemophilus influenzae (strain ATCC 51907 / DSM 11121 / KW20 / Rd) protein is 1-deoxy-D-xylulose 5-phosphate reductoisomerase.